The primary structure comprises 330 residues: MATH domain and coiled-coil domain-containing protein At3g58210 (330 aa).

Positions 6 to 133 (DNKFTWVIQN…NDELKIVAEV (128 aa)) constitute an MATH domain. Residues 263-314 (FKVDWLEKKLEEVKKKKEEEQTGEARIQELEEELKEFKQKCLDREAMLEKEK) are a coiled coil.

This chain is MATH domain and coiled-coil domain-containing protein At3g58210, found in Arabidopsis thaliana (Mouse-ear cress).